A 240-amino-acid chain; its full sequence is Dihydromonapterin reductase (240 aa).

The Proton acceptor role is filled by Y152.

This sequence belongs to the short-chain dehydrogenases/reductases (SDR) family. FolM subfamily.

It catalyses the reaction (6S)-5,6,7,8-tetrahydrofolate + NADP(+) = 7,8-dihydrofolate + NADPH + H(+). The catalysed reaction is 7,8-dihydromonapterin + NADPH + H(+) = 5,6,7,8-tetrahydromonapterin + NADP(+). Catalyzes the reduction of dihydromonapterin to tetrahydromonapterin. Also has lower activity with dihydrofolate. The sequence is that of Dihydromonapterin reductase (folM) from Escherichia coli O1:K1 / APEC.